We begin with the raw amino-acid sequence, 139 residues long: Metallothiol transferase FosB (139 aa).

A VOC domain is found at 4–119 (GINHITYSVS…DGHKLELHTG (116 aa)). H7, H66, and E115 together coordinate Mg(2+). E115 functions as the Proton donor/acceptor in the catalytic mechanism.

The protein belongs to the fosfomycin resistance protein family. FosB subfamily. As to quaternary structure, homodimer. Mg(2+) serves as cofactor.

Its subcellular location is the cytoplasm. Its function is as follows. Metallothiol transferase which confers resistance to fosfomycin by catalyzing the addition of a thiol cofactor to fosfomycin. L-cysteine is probably the physiological thiol donor. This Staphylococcus haemolyticus protein is Metallothiol transferase FosB.